Here is a 410-residue protein sequence, read N- to C-terminus: Regulator of microtubule dynamics protein 2 (410 aa).

A helical transmembrane segment spans residues 9-28 (LILGIMVGTAGISLLLLWYH). Serine 51 is subject to Phosphoserine. A coiled-coil region spans residues 68-110 (FQERQLQILEKLNELLTNMEELKEEIRFLKEAIPKLEEYIQDE). Residue serine 121 is modified to Phosphoserine. The span at 122–131 (PQHRARKRRL) shows a compositional bias: basic residues. The disordered stretch occupies residues 122 to 164 (PQHRARKRRLPTIQSSATSNSSEEAESEGGYITANTDTEEQSF). Threonine 139 is modified (phosphothreonine). A Phosphotyrosine modification is found at tyrosine 152. A phosphothreonine mark is found at threonine 154 and threonine 157.

The protein belongs to the RMDN family. As to quaternary structure, interacts with microtubules.

It is found in the membrane. Its subcellular location is the cytoplasm. The protein localises to the cytoskeleton. It localises to the spindle. The protein resides in the spindle pole. The sequence is that of Regulator of microtubule dynamics protein 2 (RMDN2) from Homo sapiens (Human).